Consider the following 263-residue polypeptide: Endonuclease 8 (263 aa).

P2 functions as the Schiff-base intermediate with DNA in the catalytic mechanism. The active-site Proton donor is E3. K53 functions as the Proton donor; for beta-elimination activity in the catalytic mechanism. Residues Q70, R125, and N169 each contribute to the DNA site. The FPG-type zinc-finger motif lies at 229 to 263 (KVFHRDGEPCERCGGIIEKTTLSSRPFYWCPGCQH). R253 serves as the catalytic Proton donor; for delta-elimination activity.

It belongs to the FPG family. Requires Zn(2+) as cofactor.

It catalyses the reaction 2'-deoxyribonucleotide-(2'-deoxyribose 5'-phosphate)-2'-deoxyribonucleotide-DNA = a 3'-end 2'-deoxyribonucleotide-(2,3-dehydro-2,3-deoxyribose 5'-phosphate)-DNA + a 5'-end 5'-phospho-2'-deoxyribonucleoside-DNA + H(+). Involved in base excision repair of DNA damaged by oxidation or by mutagenic agents. Acts as a DNA glycosylase that recognizes and removes damaged bases. Has a preference for oxidized pyrimidines, such as thymine glycol, 5,6-dihydrouracil and 5,6-dihydrothymine. Has AP (apurinic/apyrimidinic) lyase activity and introduces nicks in the DNA strand. Cleaves the DNA backbone by beta-delta elimination to generate a single-strand break at the site of the removed base with both 3'- and 5'-phosphates. This Escherichia coli (strain UTI89 / UPEC) protein is Endonuclease 8.